We begin with the raw amino-acid sequence, 187 residues long: MIAEAMAQEPGSELISETQVPDAEHAGGFPPFDAASFESQLVWLVLSFAALYLLMSRVALPRIANVLEERRDRIADDLDQAAQFQLQTEEAIGAYEKALAEARAKAQGIAQETRDRLQEETERQRLAIEARLAEKISEAEKQIAATKDAALQNVRAVAVDVADTIVAQLLGDSDRSATERAVDTELS.

The chain crosses the membrane as a helical span at residues 39 to 61; the sequence is SQLVWLVLSFAALYLLMSRVALP.

This sequence belongs to the ATPase B chain family. In terms of assembly, F-type ATPases have 2 components, F(1) - the catalytic core - and F(0) - the membrane proton channel. F(1) has five subunits: alpha(3), beta(3), gamma(1), delta(1), epsilon(1). F(0) has three main subunits: a(1), b(2) and c(10-14). The alpha and beta chains form an alternating ring which encloses part of the gamma chain. F(1) is attached to F(0) by a central stalk formed by the gamma and epsilon chains, while a peripheral stalk is formed by the delta and b chains.

The protein localises to the cell inner membrane. Functionally, f(1)F(0) ATP synthase produces ATP from ADP in the presence of a proton or sodium gradient. F-type ATPases consist of two structural domains, F(1) containing the extramembraneous catalytic core and F(0) containing the membrane proton channel, linked together by a central stalk and a peripheral stalk. During catalysis, ATP synthesis in the catalytic domain of F(1) is coupled via a rotary mechanism of the central stalk subunits to proton translocation. In terms of biological role, component of the F(0) channel, it forms part of the peripheral stalk, linking F(1) to F(0). The sequence is that of ATP synthase subunit b 2 from Parvibaculum lavamentivorans (strain DS-1 / DSM 13023 / NCIMB 13966).